An 89-amino-acid chain; its full sequence is Small ribosomal subunit protein uS15 (89 aa).

This sequence belongs to the universal ribosomal protein uS15 family. As to quaternary structure, part of the 30S ribosomal subunit. Forms a bridge to the 50S subunit in the 70S ribosome, contacting the 23S rRNA.

Functionally, one of the primary rRNA binding proteins, it binds directly to 16S rRNA where it helps nucleate assembly of the platform of the 30S subunit by binding and bridging several RNA helices of the 16S rRNA. Its function is as follows. Forms an intersubunit bridge (bridge B4) with the 23S rRNA of the 50S subunit in the ribosome. The protein is Small ribosomal subunit protein uS15 of Bifidobacterium animalis subsp. lactis (strain AD011).